The chain runs to 104 residues: MTKSELMVRLAEVFAAKNGTHLLAKDVEYSVKVLVDTMTRSLARGQRIEIRGFGSFDLNHRPARIGRNPKTGERVEVPEKHVPHFKPGKELRERVDLALKENAN.

Belongs to the bacterial histone-like protein family. In terms of assembly, heterodimer of an alpha and a beta chain.

This protein is one of the two subunits of integration host factor, a specific DNA-binding protein that functions in genetic recombination as well as in transcriptional and translational control. The polypeptide is Integration host factor subunit beta (ihfB) (Neisseria gonorrhoeae).